Consider the following 325-residue polypeptide: Acetyl-coenzyme A carboxylase carboxyl transferase subunit alpha (325 aa).

A CoA carboxyltransferase C-terminal domain is found at 38-292 (RLEDRLAKLQ…DETLKQSLKT (255 aa)).

The protein belongs to the AccA family. In terms of assembly, acetyl-CoA carboxylase is a heterohexamer composed of biotin carboxyl carrier protein (AccB), biotin carboxylase (AccC) and two subunits each of ACCase subunit alpha (AccA) and ACCase subunit beta (AccD).

It is found in the cytoplasm. It carries out the reaction N(6)-carboxybiotinyl-L-lysyl-[protein] + acetyl-CoA = N(6)-biotinyl-L-lysyl-[protein] + malonyl-CoA. It participates in lipid metabolism; malonyl-CoA biosynthesis; malonyl-CoA from acetyl-CoA: step 1/1. Inhibited by pyrrolidine dione antibiotics moiramide B (CPD1) and CPD2. Component of the acetyl coenzyme A carboxylase (ACC) complex. First, biotin carboxylase catalyzes the carboxylation of biotin on its carrier protein (BCCP) and then the CO(2) group is transferred by the carboxyltransferase to acetyl-CoA to form malonyl-CoA. This chain is Acetyl-coenzyme A carboxylase carboxyl transferase subunit alpha, found in Bacillus subtilis (strain 168).